Reading from the N-terminus, the 951-residue chain is Leucine-rich repeat-containing G-protein coupled receptor 4 (951 aa).

The N-terminal stretch at 1 to 24 (MPGPLGLLCFLALGLLGSAGPSGA) is a signal peptide. In terms of domain architecture, LRRNT spans 25–57 (APPLCAAPCSCDGDRRVDCSGKGLTAVPEGLSA). The Extracellular portion of the chain corresponds to 25 to 544 (APPLCAAPCS…LLGSWMIRLT (520 aa)). 2 disulfide bridges follow: Cys-29/Cys-35 and Cys-33/Cys-43. 10 LRR repeats span residues 58–79 (FTQA…AFKN), 82–103 (FLEE…ALSG), 106–127 (ELKV…AIRG), 130–151 (ALQS…SFEG), 154–177 (QLRH…SNLP), 178–199 (TLQA…AFTN), 202–223 (SLVV…CFDG), 226–247 (NLET…IKAL), 249–270 (SLKE…AFDG), and 273–294 (LLRT…AFHN). N-linked (GlcNAc...) asparagine glycosylation occurs at Asn-68. Asn-199 is a glycosylation site (N-linked (GlcNAc...) asparagine). Asn-294 and Asn-314 each carry an N-linked (GlcNAc...) asparagine glycan. LRR repeat units follow at residues 320-341 (HLES…LCQE), 344-365 (MLRT…NGCH), 366-387 (ALEE…TFQG), 390-411 (SLRI…AFAT), and 414-435 (PITN…GLNG). Residues Cys-339 and Cys-364 are joined by a disulfide bond. Disulfide bonds link Cys-470–Cys-522 and Cys-471–Cys-476. Asn-505 carries N-linked (GlcNAc...) asparagine glycosylation. A helical membrane pass occupies residues 545 to 565 (VWFIFLVALFFNLLVILTTFA). Residues 566–575 (SCTSLPSSKL) lie on the Cytoplasmic side of the membrane. The helical transmembrane segment at 576–596 (FIGLISVSNLFMGIYTGILTF) threads the bilayer. The Extracellular portion of the chain corresponds to 597-620 (LDAVSWGRFAEFGIWWETGSGCKV). A disulfide bond links Cys-618 and Cys-693. A helical transmembrane segment spans residues 621 to 641 (AGFLAVFSSESAIFLLMLATV). The Cytoplasmic portion of the chain corresponds to 642–661 (ERSLSAKDIMKNGKSNHLKQ). Residues 662-682 (FRVAALLAFLGATVAGCFPLF) traverse the membrane as a helical segment. Residues 683 to 703 (HRGEYSASPLCLPFPTGETPS) are Extracellular-facing. The helical transmembrane segment at 704 to 724 (LGFTVTLVLLNSLAFLLMAVI) threads the bilayer. The Cytoplasmic portion of the chain corresponds to 725 to 756 (YTKLYCNLEKEDLSENSQSSMIKHVAWLIFTN). Residues 757–777 (CIFFCPVAFFSFAPLITAISI) form a helical membrane-spanning segment. Over 778 to 783 (SPEIMK) the chain is Extracellular. A helical membrane pass occupies residues 784-804 (SVTLIFFPLPACLNPVLYVFF). Residues 805 to 951 (NPKFKEDWKL…YAYNLPRVKD (147 aa)) lie on the Cytoplasmic side of the membrane. Ser-920 carries the phosphoserine modification.

The protein belongs to the G-protein coupled receptor 1 family. As to expression, expressed in multiple steroidogenic tissues: placenta, ovary, testis and adrenal. Expressed also in spinal cord, thyroid, stomach, trachea, heart, pancreas, kidney, prostate and spleen.

The protein resides in the cell membrane. Its function is as follows. Receptor for R-spondins that potentiates the canonical Wnt signaling pathway and is involved in the formation of various organs. Upon binding to R-spondins (RSPO1, RSPO2, RSPO3 or RSPO4), associates with phosphorylated LRP6 and frizzled receptors that are activated by extracellular Wnt receptors, triggering the canonical Wnt signaling pathway to increase expression of target genes. In contrast to classical G-protein coupled receptors, does not activate heterotrimeric G-proteins to transduce the signal. Its function as activator of the Wnt signaling pathway is required for the development of various organs, including liver, kidney, intestine, bone, reproductive tract and eye. May also act as a receptor for norrin (NDP), such results however require additional confirmation in vivo. Required during spermatogenesis to activate the Wnt signaling pathway in peritubular myoid cells. Required for the maintenance of intestinal stem cells and Paneth cell differentiation in postnatal intestinal crypts. Acts as a regulator of bone formation and remodeling. Involved in kidney development; required for maintaining the ureteric bud in an undifferentiated state. Involved in the development of the anterior segment of the eye. Required during erythropoiesis. Also acts as a negative regulator of innate immunity by inhibiting TLR2/TLR4 associated pattern-recognition and pro-inflammatory cytokine production. Plays an important role in regulating the circadian rhythms of plasma lipids, partially through regulating the rhythmic expression of MTTP. Required for proper development of GnRH neurons (gonadotropin-releasing hormone expressing neurons) that control the release of reproductive hormones from the pituitary gland. The chain is Leucine-rich repeat-containing G-protein coupled receptor 4 (LGR4) from Homo sapiens (Human).